Reading from the N-terminus, the 777-residue chain is Transcriptional regulator QRICH1 (777 aa).

Methionine 1 carries the N-acetylmethionine modification. Residues 6-48 (ENTISFEEYIRVKARSVPQHRMKEFLDSLASKGPEALQEFQQT) form the CARD domain. Disordered stretches follow at residues 140 to 164 (IQGQ…SPSQ) and 219 to 240 (ALSP…VGTA). Position 346 is a phosphoserine (serine 346). Glycyl lysine isopeptide (Lys-Gly) (interchain with G-Cter in SUMO2) cross-links involve residues lysine 354 and lysine 359. The tract at residues 420–440 (QQQPQQQTAQEQTPPPQQQQQ) is disordered. Serine 465 bears the Phosphoserine mark.

In terms of tissue distribution, expressed highly in prefrontal cortex, craniofacial area and near the limbs of mouse embryos. Expressed in heart, skeletal muscle, liver, kidney, lung, brain, spleen, intestine and growth plate in mice.

Its subcellular location is the nucleus. It is found in the cytoplasm. It localises to the cell membrane. Functionally, transcriptional regulator that acts as a mediator of the integrated stress response (ISR) through transcriptional control of protein homeostasis under conditions of ER stress. Controls the outcome of the unfolded protein response (UPR), an ER-stress response pathway that either promotes recovery of ER homeostasis and cell survival, or triggers the terminal UPR which elicits programmed cell death when ER stress is prolonged and unresolved. ER stress induces QRICH1 translation by a ribosome translation re-initiation mechanism in response to EIF2S1/eIF-2-alpha phosphorylation, and stress-induced QRICH1 regulates a transcriptional program associated with protein translation, protein secretion-mediated proteotoxicity and cell death during the terminal UPR. May cooperate with ATF4 transcription factor signaling to regulate ER homeostasis which is critical for cell viability. Up-regulates CASP3/caspase-3 activity in epithelial cells under ER stress. Central regulator of proteotoxicity associated with ER stress-mediated inflammatory diseases in the intestines and liver. Involved in chondrocyte hypertrophy, a process required for normal longitudinal bone growth. In Mus musculus (Mouse), this protein is Transcriptional regulator QRICH1.